Here is a 307-residue protein sequence, read N- to C-terminus: Actin maturation protease (307 aa).

The segment at 1–34 (MSLENDAAAPPPPPLPPPPPPQPPSLARSESSKK) is disordered. A compositionally biased stretch (pro residues) spans 9 to 24 (APPPPPLPPPPPPQPP). Positions 80–200 (SLIQDGPQCG…WAVASGILLG (121 aa)) are peptidase C39-like. Residue cysteine 88 is part of the active site.

It belongs to the ACTMAP family.

It localises to the cytoplasm. It catalyses the reaction N-terminal N(alpha)-acetyl-L-methionyl-L-aspartyl-[protein] + H2O = N-terminal L-aspartyl-[protein] + N-acetyl-L-methionine. The catalysed reaction is N-terminal N(alpha)-acetyl-L-methionyl-L-glutamyl-[protein] + H2O = N-terminal L-glutamyl-[protein] + N-acetyl-L-methionine. The enzyme catalyses N-terminal N(alpha)-acetyl-L-cysteinyl-L-aspartyl-[protein] + H2O = N-terminal L-aspartyl-[protein] + N-acetyl-L-cysteine. It carries out the reaction N-terminal N(alpha)-acetyl-L-cysteinyl-L-glutamyl-[protein] + H2O = N-terminal L-glutamyl-[protein] + N-acetyl-L-cysteine. Actin maturation protease that specifically mediates the cleavage of immature acetylated N-terminal actin, thereby contributing to actin maturation. Cleaves N-terminal acetylated methionine of immature cytoplasmic actin after translation. Cleaves N-terminal acetylated cysteine of muscle actin after canonical removal of N-terminal methionine. This chain is Actin maturation protease, found in Danio rerio (Zebrafish).